The chain runs to 1080 residues: Headcase protein (1080 aa).

7 disordered regions span residues 1 to 27 (MAPR…LQQQ), 181 to 277 (IYLN…GNNG), 310 to 335 (SLSS…ISVS), 655 to 693 (PLES…QPPK), 798 to 826 (SKYQ…QHAT), 891 to 916 (SGCS…DGSK), and 940 to 974 (QRQQ…NGWS). A compositionally biased stretch (polar residues) spans 181–197 (IYLNGSGNRPTLANGSL). Over residues 218 to 228 (NGGGGGGGAGV) the composition is skewed to gly residues. Over residues 232–251 (TKTPLSNNNGNSYAGLTPNP) the composition is skewed to polar residues. Low complexity predominate over residues 263-277 (NNGNTASNGSSGNNG). Residues 663 to 688 (GATTTQVPNAQGSPTASGCSSNTIAS) are compositionally biased toward polar residues. Low complexity predominate over residues 801 to 826 (QQQQHQQQQQQRQQQHNLQPQQQHAT). The span at 900–913 (QPSLSPTASSNGND) shows a compositional bias: polar residues. Over residues 941 to 974 (RQQPPQQQVPQQQPHAASPTASLTSSSSSSNGWS) the composition is skewed to low complexity.

As to expression, expressed in all imaginal cells of the embryo and larvae. Expressed in a subset of tracheal fusion cells from stage 14 to the end of embryogenesis in metameres 2-9, lateral trunk and ventral anastomoses.

Its subcellular location is the cytoplasm. Its function is as follows. Required for imaginal cell differentiation, may be involved in hormonal responsiveness during metamorphosis. Involved in an inhibitory signaling mechanism to determine the number of cells that will form unicellular sprouts in the trachea. Regulated by transcription factor esg. The longer hdc protein is completely functional and the shorter protein carries some function. In Drosophila melanogaster (Fruit fly), this protein is Headcase protein.